A 570-amino-acid chain; its full sequence is Endo-1,4-beta-xylanase 5-like (570 aa).

The first 23 residues, 1 to 23, serve as a signal peptide directing secretion; that stretch reads MNSIKNGFFLCMIFLLWCHVDSG. 3 N-linked (GlcNAc...) asparagine glycosylation sites follow: Asn-197, Asn-261, and Asn-307. Residues 202–501 enclose the GH10 domain; it reads KGVVISLKQT…TQTGDVIDKL (300 aa). Glu-332 (proton donor) is an active-site residue. Asn-346 carries an N-linked (GlcNAc...) asparagine glycan. Glu-439 serves as the catalytic Nucleophile. N-linked (GlcNAc...) asparagine glycans are attached at residues Asn-490, Asn-515, Asn-537, and Asn-545.

It belongs to the glycosyl hydrolase 10 (cellulase F) family.

It carries out the reaction Endohydrolysis of (1-&gt;4)-beta-D-xylosidic linkages in xylans.. Its pathway is glycan degradation; xylan degradation. Its function is as follows. Binds to and hydrolyzes insoluble and soluble xylan substrates. This Arabidopsis thaliana (Mouse-ear cress) protein is Endo-1,4-beta-xylanase 5-like.